Here is a 199-residue protein sequence, read N- to C-terminus: NAD(P)H dehydrogenase (quinone) (199 aa).

Residues Val4–Val190 enclose the Flavodoxin-like domain. FMN is bound by residues Ser10–Ile15 and Thr78–Phe80. Tyr12 serves as a coordination point for NAD(+). Trp98 is a binding site for substrate. FMN contacts are provided by residues Ser113–Gly119 and His134.

It belongs to the WrbA family. The cofactor is FMN.

It carries out the reaction a quinone + NADH + H(+) = a quinol + NAD(+). It catalyses the reaction a quinone + NADPH + H(+) = a quinol + NADP(+). This is NAD(P)H dehydrogenase (quinone) from Gluconacetobacter diazotrophicus (strain ATCC 49037 / DSM 5601 / CCUG 37298 / CIP 103539 / LMG 7603 / PAl5).